The sequence spans 87 residues: Kappa 1a-bungarotoxin (87 aa).

The first 21 residues, 1 to 21 (MKTLLLTLVVVTIVCLDLGYT), serve as a signal peptide directing secretion. Cystine bridges form between C24/C42, C35/C63, C48/C52, C67/C79, and C80/C85.

It belongs to the three-finger toxin family. Long-chain subfamily. Kappa-neurotoxin sub-subfamily. As to quaternary structure, homo- and heterodimer; non-covalently linked. In terms of tissue distribution, expressed by the venom gland.

The protein localises to the secreted. Functionally, postsynaptic neurotoxin that binds and inhibits neuronal nicotinic acetylcholine receptors (nAChR) with high affinity (IC(50)&lt;100 nM). Is a selective, and slowly reversible antagonist of alpha-3/CHRNA3-containing and some alpha-4/CHRNA4-containing AChRs. The polypeptide is Kappa 1a-bungarotoxin (Bungarus candidus (Malayan krait)).